We begin with the raw amino-acid sequence, 517 residues long: Ubiquitin carboxyl-terminal hydrolase 30 (517 aa).

Residues 1–35 (MLSSRAQAARTAADKALQRFLRTGAAVRYKVMKNW) are Mitochondrial intermembrane-facing. The chain crosses the membrane as a helical span at residues 36–56 (GVIGGIAAALAAGIYVIWGPI). Residues 57–517 (TERKKRRKGL…QQGREYRSEE (461 aa)) are Cytoplasmic-facing. The region spanning 68-502 (PGLVNLGNTC…SAYLLFYERV (435 aa)) is the USP domain. Cysteine 77 serves as the catalytic Nucleophile. Residues lysine 235 and lysine 289 each participate in a glycyl lysine isopeptide (Lys-Gly) (interchain with G-Cter in ubiquitin) cross-link. Residues 364–395 (SQHGPKATESPGSALGVQDTQAAPKPGLSQPA) form a disordered region. The active-site Proton acceptor is the histidine 452.

The protein belongs to the peptidase C19 family. Ubiquitinated by parkin (PRKN) at Lys-235 and Lys-289, leading to its degradation.

Its subcellular location is the mitochondrion outer membrane. The catalysed reaction is Thiol-dependent hydrolysis of ester, thioester, amide, peptide and isopeptide bonds formed by the C-terminal Gly of ubiquitin (a 76-residue protein attached to proteins as an intracellular targeting signal).. Its activity is regulated as follows. Inhibited by the diterpenoid derivative 15-oxospiramilactone (S3). Functionally, deubiquitinating enzyme tethered to the mitochondrial outer membrane that acts as a key inhibitor of mitophagy by counteracting the action of parkin (PRKN): hydrolyzes ubiquitin attached by parkin on target proteins, such as RHOT1/MIRO1 and TOMM20, thereby blocking parkin's ability to drive mitophagy. Preferentially cleaves 'Lys-6'- and 'Lys-11'-linked polyubiquitin chains, 2 types of linkage that participate in mitophagic signaling. Does not cleave efficiently polyubiquitin phosphorylated at 'Ser-65'. Acts as a negative regulator of mitochondrial fusion by mediating deubiquitination of MFN1 and MFN2. This chain is Ubiquitin carboxyl-terminal hydrolase 30 (Usp30), found in Rattus norvegicus (Rat).